The primary structure comprises 468 residues: 6-phospho-beta-galactosidase (468 aa).

Q19, H116, N159, E160, and N297 together coordinate D-galactose 6-phosphate. Residue E160 is the Proton donor of the active site. E375 functions as the Nucleophile in the catalytic mechanism. D-galactose 6-phosphate-binding residues include S428, W429, K435, and Y437.

This sequence belongs to the glycosyl hydrolase 1 family.

It carries out the reaction a 6-phospho-beta-D-galactoside + H2O = D-galactose 6-phosphate + an alcohol. The protein operates within carbohydrate metabolism; lactose degradation; D-galactose 6-phosphate and beta-D-glucose from lactose 6-phosphate: step 1/1. The chain is 6-phospho-beta-galactosidase from Streptococcus uberis (strain ATCC BAA-854 / 0140J).